Here is a 443-residue protein sequence, read N- to C-terminus: Tubulin epsilon and delta complex protein 2 (443 aa).

Residues Arg8 to Arg33 adopt a coiled-coil conformation. Disordered regions lie at residues Ala45–Gln72 and Gly93–Pro146. The segment covering Leu106–Ser124 has biased composition (low complexity).

In terms of assembly, interacts with TEDC1. Found in a complex with TEDC1, TEDC2, TUBE1 and TUBD1.

The protein localises to the cell projection. It is found in the cilium. Its subcellular location is the cytoplasm. It localises to the cytoskeleton. The protein resides in the microtubule organizing center. The protein localises to the centrosome. It is found in the centriole. In terms of biological role, acts as a positive regulator of ciliary hedgehog signaling. Required for centriole stability. The polypeptide is Tubulin epsilon and delta complex protein 2 (Bos taurus (Bovine)).